A 541-amino-acid polypeptide reads, in one-letter code: Chaperonin GroEL (541 aa).

ATP is bound by residues 29–32 (TLGP), 86–90 (DGTTT), Gly413, 476–478 (NAA), and Asp492.

The protein belongs to the chaperonin (HSP60) family. Forms a cylinder of 14 subunits composed of two heptameric rings stacked back-to-back. Interacts with the co-chaperonin GroES.

It is found in the cytoplasm. The catalysed reaction is ATP + H2O + a folded polypeptide = ADP + phosphate + an unfolded polypeptide.. Together with its co-chaperonin GroES, plays an essential role in assisting protein folding. The GroEL-GroES system forms a nano-cage that allows encapsulation of the non-native substrate proteins and provides a physical environment optimized to promote and accelerate protein folding. The chain is Chaperonin GroEL from Streptococcus equi subsp. equi (strain 4047).